We begin with the raw amino-acid sequence, 208 residues long: Guanylate kinase (208 aa).

Positions 3-181 constitute a Guanylate kinase-like domain; sequence GSLFIITAAS…ALTELKAIIV (179 aa). 10–17 contacts ATP; sequence AASGTGKT.

This sequence belongs to the guanylate kinase family.

The protein localises to the cytoplasm. It catalyses the reaction GMP + ATP = GDP + ADP. Functionally, essential for recycling GMP and indirectly, cGMP. This is Guanylate kinase from Psychrobacter arcticus (strain DSM 17307 / VKM B-2377 / 273-4).